Reading from the N-terminus, the 185-residue chain is Probable nicotinate-nucleotide adenylyltransferase (185 aa).

It belongs to the NadD family.

The catalysed reaction is nicotinate beta-D-ribonucleotide + ATP + H(+) = deamido-NAD(+) + diphosphate. Its pathway is cofactor biosynthesis; NAD(+) biosynthesis; deamido-NAD(+) from nicotinate D-ribonucleotide: step 1/1. In terms of biological role, catalyzes the reversible adenylation of nicotinate mononucleotide (NaMN) to nicotinic acid adenine dinucleotide (NaAD). The polypeptide is Probable nicotinate-nucleotide adenylyltransferase (Methylorubrum extorquens (strain PA1) (Methylobacterium extorquens)).